A 1586-amino-acid polypeptide reads, in one-letter code: COP1-interactive protein 1 (1586 aa).

The 75-residue stretch at 10–84 folds into the NAB domain; it reads LKSFFEPHFD…RQYDDLTGEI (75 aa). The segment at 88 to 119 is disordered; it reads VNGKGESSSSSSSDSDSDHSSKRKVKRNGNGK. 4 coiled-coil regions span residues 128–411, 437–1196, 1225–1336, and 1372–1406; these read TGAL…LKES, ASEL…LKEE, LETL…TEAT, and MESL…SNQK. 5 LRR repeats span residues 173–187, 188–210, 216–239, 261–285, and 287–309; these read SEEI…TEKL, EDEK…VAGK, NQKL…GIKR, TSNL…MNSA, and EENK…GQTT. A compositionally biased stretch (basic and acidic residues) spans 249-262; it reads DWKTTSDQLKDETS. A disordered region spans residues 249-286; the sequence is DWKTTSDQLKDETSNLKQQLEASEQRVSELTSGMNSAE. Residues 325-353 are disordered; that stretch reads KEKESEHSSLVELHKTHERESSSQVKELE. LRR repeat units follow at residues 384 to 410, 437 to 461, 473 to 498, 560 to 586, 613 to 637, 649 to 674, 768 to 792, 824 to 850, 856 to 880, 902 to 929, 944 to 968, 990 to 1014, 1077 to 1101, 1120 to 1144, 1195 to 1220, 1247 to 1272, 1372 to 1396, 1398 to 1417, 1426 to 1448, and 1450 to 1474; these read IAEL…QLKE, ASEL…LKAA, VETM…KLKD, VSEL…LKDA, LEIM…ELKD, LSEL…LNAA, LAES…AHKR, VKEL…LNSS, ESTI…LFSL, LRGL…LKAA, QIMV…ESKL, ISEL…LEDN, RAEL…SEEA, EEII…KIKG, VQMH…NLKN, MESL…ISNI, VKLR…LTEK, AKHL…TYRG, and IKEI…LTEK. The tract at residues 430 to 456 is disordered; sequence QRDSSTRASELEAQLESSKQQVSDLSA. The span at 444 to 455 shows a compositional bias: polar residues; that stretch reads LESSKQQVSDLS. The disordered stretch occupies residues 965-985; the sequence is LKAAEEESRTMSTKISETSDE. A coiled-coil region spans residues 1496–1530; sequence VIERNHEKEKMNKEIEKKDEEIKKLGGKVREDEKE.

Interacts with COP1 coiled-coil region. As to expression, mainly expressed in photosynthetic and vascular tissues. Accumulates in both dark-grown and light-grown seedlings roots and shoots, leaves and flowers (at protein level).

The protein localises to the cell membrane. Its subcellular location is the cytoplasm. It localises to the cytoskeleton. Positive regulator of abscisic acid (ABA)-mediated signaling pathways involved in abiotic stress responses (e.g. osmotic stress) and leading to various plant adaptation (e.g. stomata closure). The polypeptide is COP1-interactive protein 1 (Arabidopsis thaliana (Mouse-ear cress)).